Consider the following 162-residue polypeptide: MKVRILTVGNKMPKWVQTGFDEYHKRIQPMLNTEIVEIAAAKRAKNPSDANLAQYREQEGQAILAAHAAAGREQLWVLDVKGKMLSTENLADKLADGMQQGDDIALVIGGADGVSPEVLAKADVKWSLSALTLPHPLVRVVLMEQLYRAMSINHNHPYHRGN.

Residues leucine 78, glycine 109, and 128–133 (LSALTL) contribute to the S-adenosyl-L-methionine site.

The protein belongs to the RNA methyltransferase RlmH family. As to quaternary structure, homodimer.

The protein localises to the cytoplasm. The enzyme catalyses pseudouridine(1915) in 23S rRNA + S-adenosyl-L-methionine = N(3)-methylpseudouridine(1915) in 23S rRNA + S-adenosyl-L-homocysteine + H(+). Functionally, specifically methylates the pseudouridine at position 1915 (m3Psi1915) in 23S rRNA. This chain is Ribosomal RNA large subunit methyltransferase H, found in Psychrobacter arcticus (strain DSM 17307 / VKM B-2377 / 273-4).